A 219-amino-acid polypeptide reads, in one-letter code: Resolvase (219 aa).

Residues 15–159 enclose the Resolvase/invertase-type recombinase catalytic domain; it reads VARIYLRAST…EDRRERQRQG (145 aa). The active-site O-(5'-phospho-DNA)-serine intermediate is Ser-23.

It belongs to the site-specific recombinase resolvase family.

Functionally, involved in plasmid partition. This chain is Resolvase (parA), found in Escherichia coli.